The following is a 446-amino-acid chain: T-box transcription factor TBX20 (446 aa).

Residues 50-80 (SCHPNLGDLPPLETHSDFSSGGGTGSGAPLC) are disordered. The T-box DNA-binding region spans 108-287 (LWDKFHELGT…SNPFAKGFRD (180 aa)).

The protein resides in the nucleus. Transcriptional regulator that may play a very early role in the differentiation of the cardiac precursors. In Danio rerio (Zebrafish), this protein is T-box transcription factor TBX20 (tbx20).